The chain runs to 399 residues: Carbamoyl phosphate synthase arginine-specific small chain (399 aa).

In terms of domain architecture, Glutamine amidotransferase type-1 spans 187 to 379; the sequence is DVALVDCGVK…VERMRCYRKL (193 aa). The active-site Nucleophile is the cysteine 267. Residues histidine 352 and glutamate 354 contribute to the active site.

This sequence belongs to the CarA family. Heterodimer composed of 2 chains; the small (or glutamine) chain promotes the hydrolysis of glutamine to ammonia, which is used by the large (or ammonia) chain to synthesize carbamoyl phosphate.

The protein localises to the cytoplasm. The catalysed reaction is hydrogencarbonate + L-glutamine + 2 ATP + H2O = carbamoyl phosphate + L-glutamate + 2 ADP + phosphate + 2 H(+). The enzyme catalyses L-glutamine + H2O = L-glutamate + NH4(+). The protein operates within amino-acid biosynthesis; L-arginine biosynthesis; carbamoyl phosphate from bicarbonate: step 1/1. Its function is as follows. Small subunit of the arginine-specific carbamoyl phosphate synthase (CPSase). CPSase catalyzes the formation of carbamoyl phosphate from the ammonia moiety of glutamine, carbonate, and phosphate donated by ATP, constituting the first step of 2 biosynthetic pathways, one leading to arginine and/or urea and the other to pyrimidine nucleotides. The small subunit (glutamine amidotransferase) binds and cleaves glutamine to supply the large subunit with the substrate ammonia. The chain is Carbamoyl phosphate synthase arginine-specific small chain (CPA1) from Eremothecium gossypii (strain ATCC 10895 / CBS 109.51 / FGSC 9923 / NRRL Y-1056) (Yeast).